Here is a 126-residue protein sequence, read N- to C-terminus: uncharacterized protein (126 aa).

Residues 48 to 68 form a helical membrane-spanning segment; the sequence is ILCMFPWQCVVYVFSNFVWLV.

It is found in the membrane. This is an uncharacterized protein from Homo sapiens (Human).